A 417-amino-acid chain; its full sequence is D-galactonate dehydratase family member Dd703_0947 (417 aa).

Histidine 127 provides a ligand contact to substrate. The active-site Proton donor/acceptor is tyrosine 158. A Mg(2+)-binding site is contributed by aspartate 223. Histidine 225 (proton donor/acceptor) is an active-site residue. Residues glutamate 249 and glutamate 275 each coordinate Mg(2+). Positions 275, 296, 325, 329, and 352 each coordinate substrate.

The protein belongs to the mandelate racemase/muconate lactonizing enzyme family. GalD subfamily. Mg(2+) serves as cofactor.

It carries out the reaction D-mannonate = 2-dehydro-3-deoxy-D-gluconate + H2O. The enzyme catalyses D-gluconate = 2-dehydro-3-deoxy-D-gluconate + H2O. Its function is as follows. Has low dehydratase activity with D-mannonate and D-gluconate, suggesting that these are not physiological substrates and that it has no significant role in the in vivo degradation of these compounds. Has no detectable activity with a panel of 70 other acid sugars (in vitro). The sequence is that of D-galactonate dehydratase family member Dd703_0947 from Musicola paradisiaca (strain Ech703) (Dickeya paradisiaca).